A 503-amino-acid polypeptide reads, in one-letter code: Arabinose import ATP-binding protein AraG (503 aa).

2 consecutive ABC transporter domains span residues Leu5 to Arg240 and Leu253 to Gly497. Residue Gly37–Ser44 coordinates ATP.

Belongs to the ABC transporter superfamily. Arabinose importer (TC 3.A.1.2.2) family. As to quaternary structure, the complex is composed of two ATP-binding proteins (AraG), two transmembrane proteins (AraH) and a solute-binding protein (AraF).

The protein resides in the cell inner membrane. The enzyme catalyses L-arabinose(out) + ATP + H2O = L-arabinose(in) + ADP + phosphate + H(+). In terms of biological role, part of the ABC transporter complex AraFGH involved in arabinose import. Responsible for energy coupling to the transport system. This is Arabinose import ATP-binding protein AraG from Burkholderia pseudomallei (strain K96243).